A 232-amino-acid polypeptide reads, in one-letter code: GDT1-like protein 5 (232 aa).

Helical transmembrane passes span 13 to 33 (LAMTVLSEIGDKTFFAAAILA), 40 to 60 (LVLAGCLTSLTVMTALSVSLG), 72 to 92 (THHVTTLLFFVFGILSLWEGF), 135 to 155 (PFVLQFFSPIFIKAFSITFFG), 175 to 195 (FGVVLGGVLAQALCTTAAVMG), and 207 to 227 (MVGLSSGVLFLLFGIMSYLSG).

Belongs to the GDT1 family.

The protein resides in the membrane. The chain is GDT1-like protein 5 from Oryza sativa subsp. japonica (Rice).